A 241-amino-acid chain; its full sequence is Ribulose-phosphate 3-epimerase 2 (241 aa).

Position 21 (serine 21) interacts with substrate. Residues histidine 46, aspartate 48, and histidine 79 each coordinate a divalent metal cation. Aspartate 48 functions as the Proton acceptor in the catalytic mechanism. Substrate-binding positions include histidine 79, 155-158, 192-194, and 214-215; these read GFGG, DGG, and GS. Aspartate 192 is an a divalent metal cation binding site. Aspartate 192 (proton donor) is an active-site residue.

The protein belongs to the ribulose-phosphate 3-epimerase family. A divalent metal cation is required as a cofactor.

It carries out the reaction D-ribulose 5-phosphate = D-xylulose 5-phosphate. Its pathway is carbohydrate degradation. Its function is as follows. Catalyzes the reversible epimerization of D-ribulose 5-phosphate to D-xylulose 5-phosphate. In Cupriavidus necator (strain ATCC 17699 / DSM 428 / KCTC 22496 / NCIMB 10442 / H16 / Stanier 337) (Ralstonia eutropha), this protein is Ribulose-phosphate 3-epimerase 2.